A 235-amino-acid chain; its full sequence is MNKKEQLYEGKAKKVFATDNPDLVIQEFKDDATAFNNKKKGTIADKGVVNNAISCKLFTLLEQHGIRTHLVEKLSEREMLCRHLDIIKAEVVVRNIAAGSLVRRYGFAEGTVLECPIVELYLKDDDLDDPLMIEAHAVALGVGTFEELAHLKQQAEVINTVLRSFFAERKLKLVDFKLEFGRHNGEILLGDEISPDTCRFWDLATNEKLDKDRFRFDLGSVEEAYSEVERRVLEL.

The protein belongs to the SAICAR synthetase family.

The enzyme catalyses 5-amino-1-(5-phospho-D-ribosyl)imidazole-4-carboxylate + L-aspartate + ATP = (2S)-2-[5-amino-1-(5-phospho-beta-D-ribosyl)imidazole-4-carboxamido]succinate + ADP + phosphate + 2 H(+). The protein operates within purine metabolism; IMP biosynthesis via de novo pathway; 5-amino-1-(5-phospho-D-ribosyl)imidazole-4-carboxamide from 5-amino-1-(5-phospho-D-ribosyl)imidazole-4-carboxylate: step 1/2. The polypeptide is Phosphoribosylaminoimidazole-succinocarboxamide synthase (Chlorobium chlorochromatii (strain CaD3)).